The chain runs to 166 residues: NAD(P)H-quinone oxidoreductase subunit I, chloroplastic (166 aa).

2 4Fe-4S ferredoxin-type domains span residues 55-84 (GRIH…VDWK) and 95-124 (LNYS…MTEE). The [4Fe-4S] cluster site is built by C64, C67, C70, C74, C104, C107, C110, and C114.

This sequence belongs to the complex I 23 kDa subunit family. As to quaternary structure, NDH is composed of at least 16 different subunits, 5 of which are encoded in the nucleus. The cofactor is [4Fe-4S] cluster.

Its subcellular location is the plastid. It is found in the chloroplast thylakoid membrane. The enzyme catalyses a plastoquinone + NADH + (n+1) H(+)(in) = a plastoquinol + NAD(+) + n H(+)(out). The catalysed reaction is a plastoquinone + NADPH + (n+1) H(+)(in) = a plastoquinol + NADP(+) + n H(+)(out). Its function is as follows. NDH shuttles electrons from NAD(P)H:plastoquinone, via FMN and iron-sulfur (Fe-S) centers, to quinones in the photosynthetic chain and possibly in a chloroplast respiratory chain. The immediate electron acceptor for the enzyme in this species is believed to be plastoquinone. Couples the redox reaction to proton translocation, and thus conserves the redox energy in a proton gradient. This Palafoxia arida (Spanish needles) protein is NAD(P)H-quinone oxidoreductase subunit I, chloroplastic.